Reading from the N-terminus, the 377-residue chain is MVTLGHVTAQQMSFSDALPLRSGAALRDYTLVYETYGTLNADRSNAVLVCHALNASHHVAGTYADSDRSEGWWDNLIGPGKPLDTNRFFVIGVNNPGSCFGSTGPTHPNPATGRPYGADFPVVTVEDWVDAQARLLDGLGIERLAAVIGGSLGGMQALSWTLRHPARVGHALIIASAPNLSAQNIAFNEVARRAIITDPDFHAGHFYAHGVVPKRGLRVARMIGHITYLSDDSMEAKFGRALRSAELAYSTQEIEFQIESYLRYQGDKFSEYFDANTYLLITRALDYFDPAREFGGNLSAALAVARAKFLVVSFTTDWRFSPLRSREIVKALLDNRRDVSYAEIAAPHGHDAFLLDDPRYHGVLRAYFERVAQELPR.

One can recognise an AB hydrolase-1 domain in the interval 45–356 (NAVLVCHALN…PHGHDAFLLD (312 aa)). Catalysis depends on S151, which acts as the Nucleophile. R221 is a substrate binding site. Residues D317 and H350 contribute to the active site. A substrate-binding site is contributed by D351.

This sequence belongs to the AB hydrolase superfamily. MetX family. As to quaternary structure, homodimer.

It localises to the cytoplasm. The enzyme catalyses L-homoserine + succinyl-CoA = O-succinyl-L-homoserine + CoA. It functions in the pathway amino-acid biosynthesis; L-methionine biosynthesis via de novo pathway; O-succinyl-L-homoserine from L-homoserine: step 1/1. Transfers a succinyl group from succinyl-CoA to L-homoserine, forming succinyl-L-homoserine. The polypeptide is Homoserine O-succinyltransferase (Leptothrix cholodnii (strain ATCC 51168 / LMG 8142 / SP-6) (Leptothrix discophora (strain SP-6))).